The primary structure comprises 351 residues: Protein Maqu_2141 (351 aa).

This sequence belongs to the proline racemase family.

Functionally, displays neither proline racemase activity nor trans-4-hydroxy-L-proline (t4LHyp) epimerase activity nor t3LHyp dehydratase activity. This chain is Protein Maqu_2141, found in Marinobacter nauticus (strain ATCC 700491 / DSM 11845 / VT8) (Marinobacter aquaeolei).